The sequence spans 274 residues: Cytochrome b-c1 complex subunit Rieske, mitochondrial (274 aa).

Residues 79 to 103 (SHTDVKVPDFCDYRRPEVLDSTKSS) are Mitochondrial matrix-facing. Residues 104-140 (RESSEARKSFSYMVTAVTTVGVAYAAKNAVTQFVSSM) traverse the membrane as a helical segment. Topologically, residues 141 to 274 (SASADVLAMA…FTSDDMVVVG (134 aa)) are mitochondrial intermembrane. The 86-residue stretch at 187 to 272 (EAAVELSQLR…YEFTSDDMVV (86 aa)) folds into the Rieske domain. Residues C217, H219, C236, H239, and S241 each contribute to the [2Fe-2S] cluster site. C222 and C238 form a disulfide bridge.

It belongs to the Rieske iron-sulfur protein family. Component of the ubiquinol-cytochrome c oxidoreductase (cytochrome b-c1 complex, complex III, CIII), a multisubunit enzyme composed of 11 subunits. The complex is composed of 3 respiratory subunits cytochrome b, cytochrome c1 and Rieske protein UQCRFS1, 2 core protein subunits UQCRC1/QCR1 and UQCRC2/QCR2, and 6 low-molecular weight protein subunits UQCRH/QCR6, UQCRB/QCR7, UQCRQ/QCR8, UQCR10/QCR9, UQCR11/QCR10 and subunit 9, the cleavage product of Rieske protein UQCRFS1. The complex exists as an obligatory dimer and forms supercomplexes (SCs) in the inner mitochondrial membrane with NADH-ubiquinone oxidoreductase (complex I, CI) and cytochrome c oxidase (complex IV, CIV), resulting in different assemblies (supercomplex SCI(1)III(2)IV(1) and megacomplex MCI(2)III(2)IV(2)). Incorporation of the Rieske protein UQCRFS1 is the penultimate step in complex III assembly. Interacts with TTC19, which is involved in the clearance of UQCRFS1 fragments. In terms of assembly, component of the ubiquinol-cytochrome c oxidoreductase (cytochrome b-c1 complex, complex III, CIII). Subunit 9 corresponds to the mitochondrial targeting sequence (MTS) of Rieske protein UQCRFS1. It is retained after processing and incorporated inside complex III, where it remains bound to the complex and localizes between the 2 core subunits UQCRC1/QCR1 and UQCRC2/QCR2. Requires [2Fe-2S] cluster as cofactor. Post-translationally, proteolytic processing is necessary for the correct insertion of UQCRFS1 in the complex III dimer. Several fragments are generated during UQCRFS1 insertion, most probably due to the endogenous matrix-processing peptidase (MPP) activity of the 2 core protein subunits UQCRC1/QCR1 and UQCRC2/QCR2, which are homologous to the 2 mitochondrial-processing peptidase (MPP) subunits beta-MPP and alpha-MPP respectively. The action of the protease is also necessary for the clearance of the UQCRFS1 fragments.

It localises to the mitochondrion inner membrane. The enzyme catalyses a quinol + 2 Fe(III)-[cytochrome c](out) = a quinone + 2 Fe(II)-[cytochrome c](out) + 2 H(+)(out). In terms of biological role, component of the ubiquinol-cytochrome c oxidoreductase, a multisubunit transmembrane complex that is part of the mitochondrial electron transport chain which drives oxidative phosphorylation. The respiratory chain contains 3 multisubunit complexes succinate dehydrogenase (complex II, CII), ubiquinol-cytochrome c oxidoreductase (cytochrome b-c1 complex, complex III, CIII) and cytochrome c oxidase (complex IV, CIV), that cooperate to transfer electrons derived from NADH and succinate to molecular oxygen, creating an electrochemical gradient over the inner membrane that drives transmembrane transport and the ATP synthase. The cytochrome b-c1 complex catalyzes electron transfer from ubiquinol to cytochrome c, linking this redox reaction to translocation of protons across the mitochondrial inner membrane, with protons being carried across the membrane as hydrogens on the quinol. In the process called Q cycle, 2 protons are consumed from the matrix, 4 protons are released into the intermembrane space and 2 electrons are passed to cytochrome c. The Rieske protein is a catalytic core subunit containing a [2Fe-2S] iron-sulfur cluster. It cycles between 2 conformational states during catalysis to transfer electrons from the quinol bound in the Q(0) site in cytochrome b to cytochrome c1. Incorporation of UQCRFS1 is the penultimate step in complex III assembly. Its function is as follows. Component of the ubiquinol-cytochrome c oxidoreductase (cytochrome b-c1 complex, complex III, CIII). UQCRFS1 undergoes proteolytic processing once it is incorporated in the complex III dimer. One of the fragments, called subunit 9, corresponds to its mitochondrial targeting sequence (MTS). The proteolytic processing is necessary for the correct insertion of UQCRFS1 in the complex III dimer, but the persistence of UQCRFS1-derived fragments may prevent newly imported UQCRFS1 to be processed and assembled into complex III and is detrimental for the complex III structure and function. The polypeptide is Cytochrome b-c1 complex subunit Rieske, mitochondrial (UQCRFS1) (Colobus polykomos (Western black-and-white colobus monkey)).